Here is a 329-residue protein sequence, read N- to C-terminus: GTPase Obg (329 aa).

The Obg domain maps to 1–159 (MQFIDQACIS…WLLHLELKLL (159 aa)). In terms of domain architecture, OBG-type G spans 160–328 (AEVGIIGLPN…LLKNVWEKLE (169 aa)). Residues 166 to 173 (GLPNAGKS), 191 to 195 (FTTLI), 213 to 216 (DIPG), 280 to 283 (NKKE), and 309 to 311 (SAA) contribute to the ATP site. Positions 173 and 193 each coordinate Mg(2+).

This sequence belongs to the TRAFAC class OBG-HflX-like GTPase superfamily. OBG GTPase family. In terms of assembly, monomer. The cofactor is Mg(2+).

It localises to the cytoplasm. An essential GTPase which binds GTP, GDP and possibly (p)ppGpp with moderate affinity, with high nucleotide exchange rates and a fairly low GTP hydrolysis rate. Plays a role in control of the cell cycle, stress response, ribosome biogenesis and in those bacteria that undergo differentiation, in morphogenesis control. This is GTPase Obg from Prochlorococcus marinus (strain MIT 9211).